We begin with the raw amino-acid sequence, 228 residues long: ATP-dependent dethiobiotin synthetase BioD 1 (228 aa).

An ATP-binding site is contributed by 13 to 18; it reads EVGKTV. Residue threonine 17 participates in Mg(2+) binding. Residue lysine 38 is part of the active site. Substrate is bound at residue serine 42. ATP is bound by residues aspartate 55, 116–119, 176–177, and 205–207; these read EGAG, ND, and PWL. Residues aspartate 55 and glutamate 116 each contribute to the Mg(2+) site.

It belongs to the dethiobiotin synthetase family. In terms of assembly, homodimer. Mg(2+) is required as a cofactor.

It is found in the cytoplasm. The enzyme catalyses (7R,8S)-7,8-diammoniononanoate + CO2 + ATP = (4R,5S)-dethiobiotin + ADP + phosphate + 3 H(+). The protein operates within cofactor biosynthesis; biotin biosynthesis; biotin from 7,8-diaminononanoate: step 1/2. Its function is as follows. Catalyzes a mechanistically unusual reaction, the ATP-dependent insertion of CO2 between the N7 and N8 nitrogen atoms of 7,8-diaminopelargonic acid (DAPA, also called 7,8-diammoniononanoate) to form a ureido ring. This Salmonella typhimurium (strain LT2 / SGSC1412 / ATCC 700720) protein is ATP-dependent dethiobiotin synthetase BioD 1.